A 238-amino-acid chain; its full sequence is IIGGDECNINEHRFLVALYTSRSRTLFCGGTLINQEWVLTAAHCDRKNFRIKLGMHSKKVPNEDEQTRVPKEKFFCLSSKNYTLWDKDIMLIRLDSPVKNSKHIAPFSLPSSPPSVGSVCRIMGWGRISPTEGTYPDVPHCVNINLLEYEMCRAPYPEFELPATSRTLCAGILEGGKDTCKGDSGGPLICNGQFQGIASWGDDPCAQPHKPAAYTKVFDHLDWIENIIAGNTDASCPP.

The Peptidase S1 domain occupies 1-229; the sequence is IIGGDECNIN…HLDWIENIIA (229 aa). 6 cysteine pairs are disulfide-bonded: cysteine 7/cysteine 141, cysteine 28/cysteine 44, cysteine 76/cysteine 236, cysteine 120/cysteine 190, cysteine 152/cysteine 169, and cysteine 180/cysteine 205. Catalysis depends on histidine 43, which acts as the Charge relay system. An N-linked (GlcNAc...) asparagine glycan is attached at asparagine 81. Aspartate 88 (charge relay system) is an active-site residue. Catalysis depends on serine 184, which acts as the Charge relay system.

Belongs to the peptidase S1 family. Snake venom subfamily. Monomer. Post-translationally, N-glycosylated at Asn-81 by a disaccharide composed of two N-acetylglucosamine (NAG). The presence of this N-glycan deforms the enzyme and Removing the carbohydrate moiety increases the esterase activity, but induces a complete loss of contractile response on mouse thoracic aorta. As to expression, expressed by the venom gland.

Its subcellular location is the secreted. With respect to regulation, inhibited by PMSF, L-cysteine and partially by SBTI and leupeptin. Thrombin-like enzyme that shows fibrinogenolytic activity against both the Aalpha (FGA) and Bbeta (FGB) chains of bovine fibrinogen. This enzyme has poor esterolytic activity upon BAEE substrate. It induces mouse thoracic aortic ring contraction with EC(50)=147 nmol/L. It shows vasoconstrictor effects that are independent of the enzymatic activity, but related to the release of calcium ions form the calcium store, potentially through the activation of ryanodine receptors. This is Thrombin-like enzyme AhV_TL-I from Gloydius halys (Chinese water mocassin).